The sequence spans 123 residues: Large ribosomal subunit protein bL12 (123 aa).

Belongs to the bacterial ribosomal protein bL12 family. As to quaternary structure, homodimer. Part of the ribosomal stalk of the 50S ribosomal subunit. Forms a multimeric L10(L12)X complex, where L10 forms an elongated spine to which 2 to 4 L12 dimers bind in a sequential fashion. Binds GTP-bound translation factors.

Its function is as follows. Forms part of the ribosomal stalk which helps the ribosome interact with GTP-bound translation factors. Is thus essential for accurate translation. This is Large ribosomal subunit protein bL12 from Bacillus licheniformis (strain ATCC 14580 / DSM 13 / JCM 2505 / CCUG 7422 / NBRC 12200 / NCIMB 9375 / NCTC 10341 / NRRL NRS-1264 / Gibson 46).